Here is a 61-residue protein sequence, read N- to C-terminus: Large ribosomal subunit protein uL30 (61 aa).

The protein belongs to the universal ribosomal protein uL30 family. Part of the 50S ribosomal subunit.

The chain is Large ribosomal subunit protein uL30 from Thermosipho melanesiensis (strain DSM 12029 / CIP 104789 / BI429).